The sequence spans 265 residues: Metal-activated transcriptional activator protein AMT1 (265 aa).

The segment at residues methionine 1–proline 40 is a DNA-binding region (copper-fist). Zn(2+)-binding residues include cysteine 11, cysteine 14, cysteine 23, and histidine 25. The segment at arginine 103–alanine 129 is disordered. Positions asparagine 119–proline 128 are enriched in low complexity.

The protein resides in the nucleus. In terms of biological role, trans-acting regulatory protein that activates transcription of the MT genes (metallothionein) in response to copper or silver ions. The polypeptide is Metal-activated transcriptional activator protein AMT1 (AMT1) (Candida glabrata (strain ATCC 2001 / BCRC 20586 / JCM 3761 / NBRC 0622 / NRRL Y-65 / CBS 138) (Yeast)).